Reading from the N-terminus, the 127-residue chain is Small ribosomal subunit protein uS12 (127 aa).

Aspartate 89 carries the post-translational modification 3-methylthioaspartic acid. The tract at residues 101-127 (ALDTSGVAGRTQRRSKYGAKRPKEAKK) is disordered. Basic residues predominate over residues 111–127 (TQRRSKYGAKRPKEAKK).

This sequence belongs to the universal ribosomal protein uS12 family. As to quaternary structure, part of the 30S ribosomal subunit. Contacts proteins S8 and S17. May interact with IF1 in the 30S initiation complex.

In terms of biological role, with S4 and S5 plays an important role in translational accuracy. Its function is as follows. Interacts with and stabilizes bases of the 16S rRNA that are involved in tRNA selection in the A site and with the mRNA backbone. Located at the interface of the 30S and 50S subunits, it traverses the body of the 30S subunit contacting proteins on the other side and probably holding the rRNA structure together. The combined cluster of proteins S8, S12 and S17 appears to hold together the shoulder and platform of the 30S subunit. This is Small ribosomal subunit protein uS12 from Flavobacterium johnsoniae (strain ATCC 17061 / DSM 2064 / JCM 8514 / BCRC 14874 / CCUG 350202 / NBRC 14942 / NCIMB 11054 / UW101) (Cytophaga johnsonae).